A 757-amino-acid chain; its full sequence is RNA exonuclease 3 (757 aa).

Disordered regions lie at residues V56–L259 and E474–A590. Residues E120–F132 are compositionally biased toward basic and acidic residues. 3 stretches are compositionally biased toward polar residues: residues T145–S172, Q202–K223, and M230–R240. Low complexity-rich tracts occupy residues R244–S253 and E474–S502. Polar residues predominate over residues R503–L516. 2 stretches are compositionally biased toward basic and acidic residues: residues R543 to G557 and S565 to E581. The 155-residue stretch at V597–V751 folds into the Exonuclease domain.

The protein belongs to the REXO1/REXO3 family.

Its subcellular location is the cytoplasm. The protein localises to the nucleus. Its function is as follows. 3' to 5' exoribonuclease required for proper 3' end maturation of MRP RNA and of the U5L snRNA. The polypeptide is RNA exonuclease 3 (REX3) (Yarrowia lipolytica (strain CLIB 122 / E 150) (Yeast)).